A 563-amino-acid polypeptide reads, in one-letter code: Inclusion membrane protein M (563 aa).

The Cytoplasmic portion of the chain corresponds to 1–36 (MVYFRAHQPRHTPKTFPLEVHHSFSDKHPQIAKAMR). A helical membrane pass occupies residues 37–57 (ITGIALAALSLLAVVACVIAV). Position 58 (S58) is a topological domain, vacuolar. Residues 59–79 (AGGAAIPLAVISGIAVMSGLL) traverse the membrane as a helical segment. Over 80-252 (SAATIICSAK…VLKVALSLGV (173 aa)) the chain is Cytoplasmic. A helical membrane pass occupies residues 253 to 273 (LAGVAALIIFLPPSLPFIAVI). A topological domain (vacuolar) is located at residue G274. Residues 275 to 295 (VSSLALGMASFLMIRGIKYLL) form a helical membrane-spanning segment. The Cytoplasmic portion of the chain corresponds to 296–563 (EHSPLNRKQL…QLAQYLLDNH (268 aa)).

The protein belongs to the chlamydial CPn_0065/CT_288/TC_0561 family. As to quaternary structure, interacts with host CCDC146. In host cells infected with C.trachomatis incM, CCDC146 is recruited to the periphery of the pathogen-containing vacuole but recruitment is not dependent on incM.

The protein localises to the host vacuole. Its subcellular location is the host pathogen-containing vacuole. The protein resides in the host pathogen-containing vacuole membrane. It is found in the host pathogen-containing vacuole lumen. It localises to the secreted. In terms of biological role, interferes with host cell cytokinesis, centrosome positioning and Golgi distribution, and contributes to the morphology and stability of the pathogen-containing vacuole. May exert its effects by acting directly or indirectly on host microtubules. In Chlamydia trachomatis serovar D (strain ATCC VR-885 / DSM 19411 / UW-3/Cx), this protein is Inclusion membrane protein M.